The chain runs to 357 residues: Peptide chain release factor 1 (357 aa).

Glutamine 236 is subject to N5-methylglutamine.

Belongs to the prokaryotic/mitochondrial release factor family. Post-translationally, methylated by PrmC. Methylation increases the termination efficiency of RF1.

The protein localises to the cytoplasm. Its function is as follows. Peptide chain release factor 1 directs the termination of translation in response to the peptide chain termination codons UAG and UAA. This is Peptide chain release factor 1 from Mycolicibacterium gilvum (strain PYR-GCK) (Mycobacterium gilvum (strain PYR-GCK)).